Reading from the N-terminus, the 243-residue chain is uncharacterized protein (243 aa).

The helical transmembrane segment at 55 to 75 (IILIILLTIFMVISTLVIAFV) threads the bilayer.

The protein resides in the membrane. This is an uncharacterized protein from Rickettsia prowazekii (strain Madrid E).